The sequence spans 622 residues: Low affinity potassium transport system protein Kup (622 aa).

12 consecutive transmembrane segments (helical) span residues 12–32, 49–69, 101–121, 134–154, 163–183, 213–233, 247–267, 276–296, 337–357, 363–383, 395–415, and 419–439; these read ITLAAIGVVYGDIGTSPLYTL, VFGFLSLIFWLLILVVSLKYL, FLVIIGLIGGSFFYGEVVITP, IIAPQLDTWVVPLAIIVLTLL, GLVGKLFAPIMLAWFLILAAL, VSFVALGAVVLSITGVEALYA, WFTVVLPSLVLNYFGQGALLL, PFFLLAPDWALVPMLIIATLA, IYIPFINWLLYVAVVIVIVSF, LAAAYGIAVTGTMVLTSILST, FLVALILVGLLCIDLPLFSAN, and IVSGGWLPLTLGLVMFIVMTT.

This sequence belongs to the HAK/KUP transporter (TC 2.A.72) family.

It is found in the cell inner membrane. It catalyses the reaction K(+)(in) + H(+)(in) = K(+)(out) + H(+)(out). Functionally, responsible for the low-affinity transport of potassium into the cell. Likely operates as a K(+):H(+) symporter. The protein is Low affinity potassium transport system protein Kup of Enterobacter sp. (strain 638).